A 239-amino-acid polypeptide reads, in one-letter code: Lipoprotein-releasing system ATP-binding protein LolD (239 aa).

In terms of domain architecture, ABC transporter spans leucine 9–glutamate 239. Residue glycine 45–serine 52 coordinates ATP.

The protein belongs to the ABC transporter superfamily. Lipoprotein translocase (TC 3.A.1.125) family. As to quaternary structure, the complex is composed of two ATP-binding proteins (LolD) and two transmembrane proteins (LolC and LolE).

It is found in the cell inner membrane. In terms of biological role, part of the ABC transporter complex LolCDE involved in the translocation of mature outer membrane-directed lipoproteins, from the inner membrane to the periplasmic chaperone, LolA. Responsible for the formation of the LolA-lipoprotein complex in an ATP-dependent manner. The polypeptide is Lipoprotein-releasing system ATP-binding protein LolD (Shewanella frigidimarina (strain NCIMB 400)).